We begin with the raw amino-acid sequence, 296 residues long: tRNA U34 carboxymethyltransferase (296 aa).

Residues Lys-64, Trp-78, Lys-83, Gly-102, 124–126, 151–152, Tyr-171, and Arg-286 contribute to the carboxy-S-adenosyl-L-methionine site; these read DPS and VE.

It belongs to the class I-like SAM-binding methyltransferase superfamily. CmoB family. In terms of assembly, homotetramer.

The catalysed reaction is carboxy-S-adenosyl-L-methionine + 5-hydroxyuridine(34) in tRNA = 5-carboxymethoxyuridine(34) in tRNA + S-adenosyl-L-homocysteine + H(+). Functionally, catalyzes carboxymethyl transfer from carboxy-S-adenosyl-L-methionine (Cx-SAM) to 5-hydroxyuridine (ho5U) to form 5-carboxymethoxyuridine (cmo5U) at position 34 in tRNAs. The chain is tRNA U34 carboxymethyltransferase from Sulfurimonas denitrificans (strain ATCC 33889 / DSM 1251) (Thiomicrospira denitrificans (strain ATCC 33889 / DSM 1251)).